The sequence spans 583 residues: GTP diphosphokinase CRSH1, chloroplastic (583 aa).

The segment covering Met-1–Pro-13 has biased composition (low complexity). Residues Met-1 to Gly-68 are disordered. The transit peptide at Met-1 to Gly-69 directs the protein to the chloroplast. Positions Arg-19–Arg-39 are enriched in basic residues. Residues Leu-40–Ala-66 show a composition bias toward low complexity. The region spanning Ala-119 to Met-219 is the HD domain. 2 consecutive EF-hand domains span residues Gly-473 to Gly-508 and Lys-510 to Met-542. Residues Asp-486, Asn-488, Asp-490, Arg-492, Glu-497, Asp-520, Asn-522, Asp-524, Ser-526, and Glu-531 each coordinate Ca(2+).

Belongs to the RelA/SpoT family. As to expression, expressed in roots and shoots.

Its subcellular location is the plastid. It localises to the chloroplast. It carries out the reaction GTP + ATP = guanosine 3'-diphosphate 5'-triphosphate + AMP. Activated by calcium. Functionally, possesses calcium-dependent ppGpp (guanosine 3'-diphosphate 5'-diphosphate) synthetase activity in vitro and is able to functionally complement E.coli relA mutants. May be involved in a rapid plant ppGpp-mediated response to pathogens and other stresses. This is GTP diphosphokinase CRSH1, chloroplastic from Oryza sativa subsp. japonica (Rice).